Reading from the N-terminus, the 502-residue chain is Probable cytosol aminopeptidase (502 aa).

2 residues coordinate Mn(2+): Lys-269 and Asp-274. Residue Lys-281 is part of the active site. Asp-292, Asp-351, and Glu-353 together coordinate Mn(2+). Arg-355 is a catalytic residue.

This sequence belongs to the peptidase M17 family. The cofactor is Mn(2+).

The protein localises to the cytoplasm. The enzyme catalyses Release of an N-terminal amino acid, Xaa-|-Yaa-, in which Xaa is preferably Leu, but may be other amino acids including Pro although not Arg or Lys, and Yaa may be Pro. Amino acid amides and methyl esters are also readily hydrolyzed, but rates on arylamides are exceedingly low.. The catalysed reaction is Release of an N-terminal amino acid, preferentially leucine, but not glutamic or aspartic acids.. Its function is as follows. Presumably involved in the processing and regular turnover of intracellular proteins. Catalyzes the removal of unsubstituted N-terminal amino acids from various peptides. In Shewanella sediminis (strain HAW-EB3), this protein is Probable cytosol aminopeptidase.